Consider the following 434-residue polypeptide: Tol-Pal system protein TolB (434 aa).

The signal sequence occupies residues 1–24; the sequence is MKFSAYLTTLFIVLFSLFIQTVQA.

The protein belongs to the TolB family. In terms of assembly, the Tol-Pal system is composed of five core proteins: the inner membrane proteins TolA, TolQ and TolR, the periplasmic protein TolB and the outer membrane protein Pal. They form a network linking the inner and outer membranes and the peptidoglycan layer.

The protein resides in the periplasm. Functionally, part of the Tol-Pal system, which plays a role in outer membrane invagination during cell division and is important for maintaining outer membrane integrity. This chain is Tol-Pal system protein TolB, found in Histophilus somni (strain 129Pt) (Haemophilus somnus).